Here is a 73-residue protein sequence, read N- to C-terminus: Translational regulator CsrA (73 aa).

The protein belongs to the CsrA/RsmA family. As to quaternary structure, homodimer; the beta-strands of each monomer intercalate to form a hydrophobic core, while the alpha-helices form wings that extend away from the core.

Its subcellular location is the cytoplasm. Its function is as follows. A translational regulator that binds mRNA to regulate translation initiation and/or mRNA stability. Usually binds in the 5'-UTR at or near the Shine-Dalgarno sequence preventing ribosome-binding, thus repressing translation. Its main target seems to be the major flagellin gene, while its function is anatagonized by FliW. This chain is Translational regulator CsrA, found in Clostridium kluyveri (strain NBRC 12016).